Consider the following 356-residue polypeptide: MTSPLAGMIAEHADIEKRLADPDIHNDPARARELTRRYAELATPVDLAQRLERVEGDLETAREFAEQDPSFRDEVVALEASQADLAARLRAYLVPVDPDDSRDAILEVKAGAGGEESALFAGDLLRMYLRYAERRGWRTQILDANPSDLGGYRDVSVAVKSRGTAAPGQGVFGRLRFEGGVHRVQRVPVTESAGRIHTSAAGVLVLPEAADVDIEVDPNDLRIDVFRSSGPGGQSVNTTDSAVRITHLPTGVVVSCQNEKSQLQNKESAMRILRARLLAAAREKAETAAAAARASQVRTVDRSEKVRTYNFPENRISDHRIGYKAHNLEAVLDGDLDAVIEALTEADLESRMAATP.

At Gln-234 the chain carries N5-methylglutamine.

Belongs to the prokaryotic/mitochondrial release factor family. Post-translationally, methylated by PrmC. Methylation increases the termination efficiency of RF1.

It localises to the cytoplasm. In terms of biological role, peptide chain release factor 1 directs the termination of translation in response to the peptide chain termination codons UAG and UAA. This is Peptide chain release factor 1 from Parafrankia sp. (strain EAN1pec).